Reading from the N-terminus, the 268-residue chain is Regulation of nuclear pre-mRNA domain-containing protein 1A (268 aa).

Residues 1 to 133 (MSAFSEAALE…QLRQALYGDR (133 aa)) form the CID domain.

This sequence belongs to the UPF0400 (RTT103) family. In terms of assembly, may form a heterodimer with RPRD1B. Associates with the RNA polymerase II subunit POLR2A (via CTD phosphorylated at 'Ser-2' and 'Ser-7' of the heptad repeats).

It is found in the nucleus. Functionally, interacts with phosphorylated C-terminal heptapeptide repeat domain (CTD) of the largest RNA polymerase II subunit POLR2A, and participates in dephosphorylation of the CTD by RPAP2. May act as a negative regulator of cyclin-D1 (CCND1) and cyclin-E (CCNE1) in the cell cycle. The sequence is that of Regulation of nuclear pre-mRNA domain-containing protein 1A (RPRD1A) from Gallus gallus (Chicken).